A 399-amino-acid chain; its full sequence is RNA-binding protein cabeza (399 aa).

Over residues 1–12 (MERGGYGGGSGQ) the composition is skewed to gly residues. The tract at residues 1-82 (MERGGYGGGS…RGGNSYGNGG (82 aa)) is disordered. Polar residues predominate over residues 24–34 (YQQMPNKTGNY). Residues 43–69 (KQGGGYDSGSGHRGSGGSGNGGGGGGS) are compositionally biased toward gly residues. One can recognise an RRM domain in the interval 120–206 (DTIFVSGMDP…NAIKVSLAQR (87 aa)). 2 disordered regions span residues 209–276 (NWNK…QPRD) and 300–399 (TPKG…SRPY). The segment covering 212–271 (KGGGGGGGGGGRGGFGGRRGGGGGGGGGGGGGGRFDRGGGGGGGRYDRGGGGGGGGGGGN) has biased composition (gly residues). The segment at 275–304 (RDGDWKCNSCNNTNFAWRNECNRCKTPKGD) adopts a RanBP2-type zinc-finger fold. Composition is skewed to gly residues over residues 308–339 (SSGG…GGGY), 347–361 (NSQG…GGGY), and 368–380 (NGGG…GGGG). Low complexity predominate over residues 387–399 (PMRNDGGMRSRPY).

Belongs to the RRM TET family. In terms of tissue distribution, ubiquitous. Enriched in the brain and central nervous system during embryogenesis. Enriched in the adult head. Embryos contain both isoforms A and B, whereas later in development (heads and torsos) only isoform B is detected.

It is found in the nucleus. Its function is as follows. May participate in a function common to the expression of most genes transcribed by RNA polymerase II. This Drosophila melanogaster (Fruit fly) protein is RNA-binding protein cabeza (caz).